We begin with the raw amino-acid sequence, 356 residues long: 1-deoxy-D-xylulose 5-phosphate reductoisomerase (356 aa).

The NADPH site is built by Thr7, Gly8, Ser9, Ile10, Gly31, Asn33, and Asn111. A 1-deoxy-D-xylulose 5-phosphate-binding site is contributed by Lys112. Residue Glu113 participates in NADPH binding. Asp131 serves as a coordination point for Mn(2+). Residues Ser132, Glu133, Ser155, and His178 each contribute to the 1-deoxy-D-xylulose 5-phosphate site. Glu133 is a binding site for Mn(2+). Gly184 serves as a coordination point for NADPH. Positions 191, 196, 197, and 200 each coordinate 1-deoxy-D-xylulose 5-phosphate. Residue Glu200 coordinates Mn(2+).

This sequence belongs to the DXR family. Mg(2+) serves as cofactor. The cofactor is Mn(2+).

The enzyme catalyses 2-C-methyl-D-erythritol 4-phosphate + NADP(+) = 1-deoxy-D-xylulose 5-phosphate + NADPH + H(+). The protein operates within isoprenoid biosynthesis; isopentenyl diphosphate biosynthesis via DXP pathway; isopentenyl diphosphate from 1-deoxy-D-xylulose 5-phosphate: step 1/6. Its function is as follows. Catalyzes the NADPH-dependent rearrangement and reduction of 1-deoxy-D-xylulose-5-phosphate (DXP) to 2-C-methyl-D-erythritol 4-phosphate (MEP). The chain is 1-deoxy-D-xylulose 5-phosphate reductoisomerase from Campylobacter jejuni subsp. jejuni serotype O:23/36 (strain 81-176).